A 337-amino-acid chain; its full sequence is HTH-type transcriptional regulator DegA (337 aa).

The region spanning 1-57 (MKTTIYDVAKAAGVSITTVSRVINNTGRISDKTRQKVMNVMNEMAYTPNVHAAALTG) is the HTH lacI-type domain. Positions 5–24 (IYDVAKAAGVSITTVSRVIN) form a DNA-binding region, H-T-H motif. Positions 300 to 319 (AERHRTAGRSNRGKRKAKQK) are disordered.

In terms of biological role, involved in the control of degradation of B.subtilis amidophosphoribosyltransferase (purF). Probably activates the gene for a degradative protease. This Bacillus subtilis (strain 168) protein is HTH-type transcriptional regulator DegA (degA).